The following is a 331-amino-acid chain: Probable zinc-binding oxidoreductase, mitochondrial (331 aa).

Residues 1 to 29 (MASVTSVPKTGRSVNQDVPATTLTLQTRP) are compositionally biased toward polar residues. Residues 1 to 34 (MASVTSVPKTGRSVNQDVPATTLTLQTRPTPAPN) form a disordered region.

This sequence belongs to the zinc-containing alcohol dehydrogenase family. Quinone oxidoreductase subfamily.

It is found in the mitochondrion. This Arthroderma benhamiae (strain ATCC MYA-4681 / CBS 112371) (Trichophyton mentagrophytes) protein is Probable zinc-binding oxidoreductase, mitochondrial.